Reading from the N-terminus, the 291-residue chain is uncharacterized protein (291 aa).

Solcar repeat units lie at residues 15-93 (PGPV…IKKS), 104-190 (PRTV…IKQS), and 201-287 (LSTV…VMEI). A run of 6 helical transmembrane segments spans residues 21-41 (IIAG…AEFA), 70-90 (STVI…FDSI), 108-128 (LAGL…FESI), 169-189 (TVAR…SIKQ), 201-221 (LSTV…VYCT), and 259-280 (FWSG…VFTV).

Belongs to the mitochondrial carrier (TC 2.A.29) family.

It localises to the mitochondrion inner membrane. This is an uncharacterized protein from Schizosaccharomyces pombe (strain 972 / ATCC 24843) (Fission yeast).